Reading from the N-terminus, the 476-residue chain is Protein EARLY HEADING DATE 2 (476 aa).

Residues 1-13 (MLLSDLSSDQEAT) show a composition bias toward polar residues. Residues 1 to 27 (MLLSDLSSDQEATGSNSHGGGGGGDRM) form a disordered region. 2 consecutive C2H2-type zinc fingers follow at residues 106-128 (FVCE…RRGH) and 156-186 (YVCP…SRKH). 2 short sequence motifs (nuclear localization signal) span residues 124–131 (HRRGHNLP) and 178–185 (IKKHFSRK). Residues 191–214 (WRCERCGKRYAVHSDWKAHVKNCG) form a C2H2-type 2; degenerate zinc finger. The Zn(2+) site is built by C193, C196, H209, C213, C220, C222, H235, and C239. The segment at 218 to 241 (YRCDCGILFSRKDSLLTHRAFCDA) adopts a CCHC-type 2; atypical zinc-finger fold. The SHR-binding stretch occupies residues 228-240 (RKDSLLTHRAFCD).

It is found in the nucleus. Functionally, transcription activator that acts as a flowering master switch in both long and short days, independently of the circadian clock. Promotes flowering upstream of HD1 by up-regulating FTL1, FTL4, FTL5, FTL6, EHD1, HD3A and RFT1. Seems to repress FTL11 expression. May recognize the consensus motif 5'-TTTGTCGTAAT-3' in target gene promoters. The protein is Protein EARLY HEADING DATE 2 of Oryza sativa subsp. indica (Rice).